A 273-amino-acid chain; its full sequence is Putative esterase/lipase 3 (273 aa).

H34 is a catalytic residue. S100 acts as the Charge relay system in catalysis.

This sequence belongs to the lipase/esterase LIP3/BchO family.

The polypeptide is Putative esterase/lipase 3 (Mycoplasma genitalium (strain ATCC 33530 / DSM 19775 / NCTC 10195 / G37) (Mycoplasmoides genitalium)).